The following is a 471-amino-acid chain: MTDLPDSTRWQLWIVAFGFFMQSLDTTIVNTALPSMAQSLGESPLHMHMVIVSYVLTVAVMLPASGWLADKVGVRNIFFTAIVLFTLGSLFCALSGTLNELLLARALQGVGGAMMVPVGRLTVMKIVPREQYMAAMTFVTLPGQVGPLLGPALGGLLVEYASWHWIFLINIPVGIIGAIATLMLMPNYTMQTRRFDLSGFLLLAVGMAVLTLALDGSKGTGLSPLAITGLVAVGVVALVLYLLHARNNNRALFSLKLFRTRTFSLGLAGSFAGRIGSGMLPFMTPVFLQIGLGFSPFHAGLMMIPMVLGSMGMKRIVVQVVNRFGYRRVLVATTLGLSLVTLLFMTTALLGWYYVLPFVLFLQGMVNSTRFSSMNTLTLKDLPDNLASSGNSLLSMIMQLSMSIGVTIAGLLLGLFGSQHVSVDSSTTQTVFMYTWLSMAFIIALPAFIFARVPNDTHQNVAISRRKRSAQ.

Residues 1–11 lie on the Periplasmic side of the membrane; the sequence is MTDLPDSTRWQ. Residues 12-32 form a helical membrane-spanning segment; sequence LWIVAFGFFMQSLDTTIVNTA. Topologically, residues 33 to 48 are cytoplasmic; that stretch reads LPSMAQSLGESPLHMH. The helical transmembrane segment at 49–69 threads the bilayer; that stretch reads MVIVSYVLTVAVMLPASGWLA. Over 70–76 the chain is Periplasmic; it reads DKVGVRN. The helical transmembrane segment at 77–97 threads the bilayer; that stretch reads IFFTAIVLFTLGSLFCALSGT. Topologically, residues 98–101 are cytoplasmic; sequence LNEL. Residues 102 to 124 traverse the membrane as a helical segment; the sequence is LLARALQGVGGAMMVPVGRLTVM. The Periplasmic segment spans residues 125–137; the sequence is KIVPREQYMAAMT. Residues 138–158 traverse the membrane as a helical segment; sequence FVTLPGQVGPLLGPALGGLLV. Over 159–164 the chain is Cytoplasmic; it reads EYASWH. The chain crosses the membrane as a helical span at residues 165-185; it reads WIFLINIPVGIIGAIATLMLM. The Periplasmic portion of the chain corresponds to 186–196; the sequence is PNYTMQTRRFD. Residues 197–217 form a helical membrane-spanning segment; it reads LSGFLLLAVGMAVLTLALDGS. Over 218-224 the chain is Cytoplasmic; sequence KGTGLSP. A helical transmembrane segment spans residues 225 to 245; sequence LAITGLVAVGVVALVLYLLHA. Over 246–262 the chain is Periplasmic; that stretch reads RNNNRALFSLKLFRTRT. A helical membrane pass occupies residues 263 to 283; that stretch reads FSLGLAGSFAGRIGSGMLPFM. Residues 284–285 lie on the Cytoplasmic side of the membrane; the sequence is TP. A helical transmembrane segment spans residues 286 to 306; that stretch reads VFLQIGLGFSPFHAGLMMIPM. The Periplasmic segment spans residues 307 to 341; it reads VLGSMGMKRIVVQVVNRFGYRRVLVATTLGLSLVT. The helical transmembrane segment at 342-362 threads the bilayer; sequence LLFMTTALLGWYYVLPFVLFL. Topologically, residues 363 to 395 are cytoplasmic; the sequence is QGMVNSTRFSSMNTLTLKDLPDNLASSGNSLLS. Residues 396–416 form a helical membrane-spanning segment; the sequence is MIMQLSMSIGVTIAGLLLGLF. Topologically, residues 417 to 430 are periplasmic; the sequence is GSQHVSVDSSTTQT. Residues 431–451 traverse the membrane as a helical segment; that stretch reads VFMYTWLSMAFIIALPAFIFA. The Cytoplasmic segment spans residues 452–471; that stretch reads RVPNDTHQNVAISRRKRSAQ.

Belongs to the major facilitator superfamily. TCR/Tet family.

It is found in the cell inner membrane. This chain is Putative multidrug resistance protein MdtD, found in Escherichia coli O157:H7.